The chain runs to 209 residues: Small ribosomal subunit protein uS4 (209 aa).

Residues 99–161 (CRLDNIAFRL…SSKLVVVEMG (63 aa)) enclose the S4 RNA-binding domain.

Belongs to the universal ribosomal protein uS4 family. In terms of assembly, part of the 30S ribosomal subunit. Contacts protein S5. The interaction surface between S4 and S5 is involved in control of translational fidelity.

Its function is as follows. One of the primary rRNA binding proteins, it binds directly to 16S rRNA where it nucleates assembly of the body of the 30S subunit. In terms of biological role, with S5 and S12 plays an important role in translational accuracy. This chain is Small ribosomal subunit protein uS4, found in Acidobacterium capsulatum (strain ATCC 51196 / DSM 11244 / BCRC 80197 / JCM 7670 / NBRC 15755 / NCIMB 13165 / 161).